Here is a 434-residue protein sequence, read N- to C-terminus: Chaperone SurA (434 aa).

An N-terminal signal peptide occupies residues 1–29; the sequence is MKTLRLNFRSAILKALGALLLLQGCLAHA. 2 PpiC domains span residues 180–281 and 290–389; these read AEEY…AMLE and VEQS…QVQD.

Its subcellular location is the periplasm. It carries out the reaction [protein]-peptidylproline (omega=180) = [protein]-peptidylproline (omega=0). In terms of biological role, chaperone involved in the correct folding and assembly of outer membrane proteins. Recognizes specific patterns of aromatic residues and the orientation of their side chains, which are found more frequently in integral outer membrane proteins. May act in both early periplasmic and late outer membrane-associated steps of protein maturation. This is Chaperone SurA from Hahella chejuensis (strain KCTC 2396).